The following is a 608-amino-acid chain: Kinetochore protein NUF2 (608 aa).

The interval 121–125 is required for nuclear localization and function; the sequence is IGNLR. Coiled coils occupy residues 176–319 and 358–460; these read FESQ…QQKL and REKL…IEEE.

Belongs to the NUF2 family.

The protein localises to the chromosome. The protein resides in the centromere. Its subcellular location is the kinetochore. In terms of biological role, required for anchoring centrosomal cores to the nuclear periphery. Plays a role in chromosome segregation but is dispensable for centromere clustering. This Toxoplasma gondii (strain ATCC 50611 / Me49) protein is Kinetochore protein NUF2.